A 215-amino-acid chain; its full sequence is Large ribosomal subunit protein uL3 (215 aa).

At Gln-156 the chain carries N5-methylglutamine.

Belongs to the universal ribosomal protein uL3 family. Part of the 50S ribosomal subunit. Forms a cluster with proteins L14 and L19. In terms of processing, methylated by PrmB.

One of the primary rRNA binding proteins, it binds directly near the 3'-end of the 23S rRNA, where it nucleates assembly of the 50S subunit. The sequence is that of Large ribosomal subunit protein uL3 from Xylella fastidiosa (strain M12).